Reading from the N-terminus, the 367-residue chain is E3 ubiquitin-protein ligase RGLG3 (367 aa).

The region spanning Asn-37–Leu-257 is the VWFA domain. The RING-type zinc finger occupies Cys-323–Arg-356.

As to quaternary structure, interacts with UBC30, GRXS17 and GLB3. Binds to and coactivates GAF1/IDD2 and ENY/IDD1. Widely expressed.

It localises to the cytoplasm. The protein resides in the nucleus. It catalyses the reaction S-ubiquitinyl-[E2 ubiquitin-conjugating enzyme]-L-cysteine + [acceptor protein]-L-lysine = [E2 ubiquitin-conjugating enzyme]-L-cysteine + N(6)-ubiquitinyl-[acceptor protein]-L-lysine.. Possesses E3 ubiquitin-protein ligase in vitro. Acts as upstream modulator of jasmonate (JA) signaling in response to various stimuli, such as JA-inhibited root growth, JA-inductive gene expression, coronatine-mediated pathogen susceptibility, wound-stimulated expression of JA-responsive genes and wound-induced JA biosynthesis. Controls fumonisin B1 (FB1)-triggered programmed cell death (PCD) by modulating the JA signaling pathway. May mediate salicylic acid (SA) suppression of JA signaling in FB1-induced responses. May mediate the formation of 'Lys-48'-linked multiubiquitin chains. Mediates the polyubiquitination and subsequent proteasomal degradation of the target protein GRXS17. The protein is E3 ubiquitin-protein ligase RGLG3 of Arabidopsis thaliana (Mouse-ear cress).